The sequence spans 225 residues: MTYNELIYMVLDELKLSSDDSYYTPDHVIFLLVKYRSFLLKQRYSDIKKQIPDSDYQSICLDLIEVPAISGEPCEGSSYLRSKNKVPTTMMIGNPRVYPMDFYQGEITYISRDRMRYVGYNKFLRNIIYCSKAPDGYLYFKSWNPQFLHLEKVSFNAIFEDAKEASEMACPEENGTICKLEDKEFPIEDALVPPLIELVVKELRGPEYSPKDEDNNAKDDLPDAR.

Residues Pro206 to Arg225 form a disordered region.

In terms of assembly, homododecamer.

Its subcellular location is the virion. Forms the tail multi-ring barrel with ring protein 1, ring protein 3 and ring protein 4. The sequence is that of Ring protein 2 from Bacteroides intestinalis (Bacteroides phage PhiCrAss001).